Here is a 259-residue protein sequence, read N- to C-terminus: Ribosomal RNA large subunit methyltransferase E (259 aa).

S-adenosyl-L-methionine contacts are provided by G49, W51, D69, D88, and D112. K152 serves as the catalytic Proton acceptor. The TRAM domain occupies 199-257 (PIAEGDEHTVEIVDTGDEGDGIARIEGYTLFVDDAAEGDTVDVTVTDLKPNYGFAERRD).

The protein belongs to the class I-like SAM-binding methyltransferase superfamily. RNA methyltransferase RlmE family.

It is found in the cytoplasm. It catalyses the reaction uridine(2552) in 23S rRNA + S-adenosyl-L-methionine = 2'-O-methyluridine(2552) in 23S rRNA + S-adenosyl-L-homocysteine + H(+). In terms of biological role, specifically methylates the uridine in position 2552 of 23S rRNA at the 2'-O position of the ribose in the fully assembled 50S ribosomal subunit. The protein is Ribosomal RNA large subunit methyltransferase E of Halobacterium salinarum (strain ATCC 29341 / DSM 671 / R1).